A 666-amino-acid polypeptide reads, in one-letter code: Probable cytochrome c oxidase subunit 1 (666 aa).

The next 2 membrane-spanning stretches (helical) occupy residues 16–36 (IPLI…VWVV) and 57–77 (IGVM…SDAI). H105 provides a ligand contact to heme b. The next 13 helical transmembrane spans lie at 108 to 128 (IMIF…VVPL), 142 to 162 (SVGF…LVIG), 192 to 212 (SLQI…TTVL), 234 to 254 (SNLL…MLLL), 277 to 297 (LIWA…FGIF), 315 to 335 (MVLA…HHFF), 346 to 366 (IFGI…YNWL), 380 to 400 (MLWA…GVLV), 413 to 433 (MFLV…GAFA), 456 to 476 (FWFT…AGML), 493 to 513 (WMLV…CQIM), 591 to 611 (SPTG…LIWH), and 612 to 632 (IWWM…VFAW). Positions 283, 287, 332, and 333 each coordinate Cu cation. Positions 283 to 287 (HPEVY) form a cross-link, 1'-histidyl-3'-tyrosine (His-Tyr). H418 and H420 together coordinate heme b.

The protein belongs to the heme-copper respiratory oxidase family.

The protein localises to the cell membrane. It carries out the reaction 4 Fe(II)-[cytochrome c] + O2 + 8 H(+)(in) = 4 Fe(III)-[cytochrome c] + 2 H2O + 4 H(+)(out). The protein operates within energy metabolism; oxidative phosphorylation. The polypeptide is Probable cytochrome c oxidase subunit 1 (Bradyrhizobium diazoefficiens (strain JCM 10833 / BCRC 13528 / IAM 13628 / NBRC 14792 / USDA 110)).